Consider the following 288-residue polypeptide: tRNA pseudouridine synthase B (288 aa).

Asp38 functions as the Nucleophile in the catalytic mechanism.

This sequence belongs to the pseudouridine synthase TruB family. Type 1 subfamily.

The catalysed reaction is uridine(55) in tRNA = pseudouridine(55) in tRNA. Its function is as follows. Responsible for synthesis of pseudouridine from uracil-55 in the psi GC loop of transfer RNAs. The sequence is that of tRNA pseudouridine synthase B from Carboxydothermus hydrogenoformans (strain ATCC BAA-161 / DSM 6008 / Z-2901).